Here is a 668-residue protein sequence, read N- to C-terminus: SH2 domain-containing protein B (668 aa).

The segment at 373 to 411 (SVSGSEESYQQCNSHPQTSRQFENGNGMRLHEEDNSSID) is disordered. Positions 374–396 (VSGSEESYQQCNSHPQTSRQFEN) are enriched in polar residues. One can recognise an SH2 domain in the interval 574 to 642 (WIEGFITKEE…DNICESSERY (69 aa)).

Post-translationally, phosphorylated on tyrosine residues. In terms of tissue distribution, expressed in roots, leaves, stems and flowers.

This Arabidopsis thaliana (Mouse-ear cress) protein is SH2 domain-containing protein B.